A 314-amino-acid polypeptide reads, in one-letter code: DNA-directed RNA polymerase subunit alpha (314 aa).

The tract at residues 1–228 is alpha N-terminal domain (alpha-NTD); that stretch reads MIEIEKPRIE…EHLNIFVGLT (228 aa). The segment at 245-314 is alpha C-terminal domain (alpha-CTD); the sequence is KEKVLEMSIE…DLGLGLRKED (70 aa).

This sequence belongs to the RNA polymerase alpha chain family. As to quaternary structure, homodimer. The RNAP catalytic core consists of 2 alpha, 1 beta, 1 beta' and 1 omega subunit. When a sigma factor is associated with the core the holoenzyme is formed, which can initiate transcription.

It carries out the reaction RNA(n) + a ribonucleoside 5'-triphosphate = RNA(n+1) + diphosphate. DNA-dependent RNA polymerase catalyzes the transcription of DNA into RNA using the four ribonucleoside triphosphates as substrates. This Staphylococcus haemolyticus (strain JCSC1435) protein is DNA-directed RNA polymerase subunit alpha.